The chain runs to 439 residues: Protein translocase subunit SecY (439 aa).

The next 10 membrane-spanning stretches (helical) occupy residues 28–48, 73–93, 127–147, 156–176, 179–199, 220–240, 276–296, 318–338, 375–395, and 401–421; these read ILIT…PVPG, IFSG…LPYI, LTRY…AVWV, PLFT…VMWI, LITE…NIVA, VGGI…IVFV, GVMP…LANF, IYAL…SSLI, LTIL…AVEG, and TFQG…IDTA.

It belongs to the SecY/SEC61-alpha family. As to quaternary structure, component of the Sec protein translocase complex. Heterotrimer consisting of SecY, SecE and SecG subunits. The heterotrimers can form oligomers, although 1 heterotrimer is thought to be able to translocate proteins. Interacts with the ribosome. Interacts with SecDF, and other proteins may be involved. Interacts with SecA.

Its subcellular location is the cell inner membrane. The protein resides in the cellular thylakoid membrane. In terms of biological role, the central subunit of the protein translocation channel SecYEG. Consists of two halves formed by TMs 1-5 and 6-10. These two domains form a lateral gate at the front which open onto the bilayer between TMs 2 and 7, and are clamped together by SecE at the back. The channel is closed by both a pore ring composed of hydrophobic SecY resides and a short helix (helix 2A) on the extracellular side of the membrane which forms a plug. The plug probably moves laterally to allow the channel to open. The ring and the pore may move independently. The protein is Protein translocase subunit SecY of Synechococcus elongatus (strain ATCC 33912 / PCC 7942 / FACHB-805) (Anacystis nidulans R2).